The following is a 150-amino-acid chain: Phosphoribosyl-AMP cyclohydrolase (150 aa).

Asp93 lines the Mg(2+) pocket. Residue Cys94 participates in Zn(2+) binding. Positions 95 and 97 each coordinate Mg(2+). Residues Cys112 and Cys119 each coordinate Zn(2+).

It belongs to the PRA-CH family. Homodimer. Mg(2+) is required as a cofactor. It depends on Zn(2+) as a cofactor.

The protein resides in the cytoplasm. The enzyme catalyses 1-(5-phospho-beta-D-ribosyl)-5'-AMP + H2O = 1-(5-phospho-beta-D-ribosyl)-5-[(5-phospho-beta-D-ribosylamino)methylideneamino]imidazole-4-carboxamide. The protein operates within amino-acid biosynthesis; L-histidine biosynthesis; L-histidine from 5-phospho-alpha-D-ribose 1-diphosphate: step 3/9. Its function is as follows. Catalyzes the hydrolysis of the adenine ring of phosphoribosyl-AMP. This chain is Phosphoribosyl-AMP cyclohydrolase, found in Rhizobium leguminosarum bv. trifolii (strain WSM2304).